Reading from the N-terminus, the 295-residue chain is Acetylglutamate kinase (295 aa).

Substrate-binding positions include 66 to 67 (GG), Arg-88, and Asn-193.

Belongs to the acetylglutamate kinase family. ArgB subfamily.

The protein localises to the cytoplasm. The catalysed reaction is N-acetyl-L-glutamate + ATP = N-acetyl-L-glutamyl 5-phosphate + ADP. Its pathway is amino-acid biosynthesis; L-arginine biosynthesis; N(2)-acetyl-L-ornithine from L-glutamate: step 2/4. In terms of biological role, catalyzes the ATP-dependent phosphorylation of N-acetyl-L-glutamate. The polypeptide is Acetylglutamate kinase (Rhizobium etli (strain CIAT 652)).